The sequence spans 248 residues: Urease accessory protein UreG 1 (248 aa).

The span at 1–14 shows a compositional bias: basic and acidic residues; the sequence is MLPEHHDHGHEHGG. The interval 1-36 is disordered; it reads MLPEHHDHGHEHGGNGHGHGHRHQVNFDPTAAEPDP. 53 to 60 is a GTP binding site; it reads GPVGSGKT.

It belongs to the SIMIBI class G3E GTPase family. UreG subfamily. Homodimer. UreD, UreF and UreG form a complex that acts as a GTP-hydrolysis-dependent molecular chaperone, activating the urease apoprotein by helping to assemble the nickel containing metallocenter of UreC. The UreE protein probably delivers the nickel.

The protein resides in the cytoplasm. Functionally, facilitates the functional incorporation of the urease nickel metallocenter. This process requires GTP hydrolysis, probably effectuated by UreG. This is Urease accessory protein UreG 1 from Saccharopolyspora erythraea (strain ATCC 11635 / DSM 40517 / JCM 4748 / NBRC 13426 / NCIMB 8594 / NRRL 2338).